Consider the following 267-residue polypeptide: Glutamate 5-kinase (267 aa).

Lys15 lines the ATP pocket. Residues Ser55, Asp142, and Asn158 each coordinate substrate. Residues 178-179 and 220-226 each bind ATP; these read SD and TGGMATK.

This sequence belongs to the glutamate 5-kinase family.

Its subcellular location is the cytoplasm. The catalysed reaction is L-glutamate + ATP = L-glutamyl 5-phosphate + ADP. The protein operates within amino-acid biosynthesis; L-proline biosynthesis; L-glutamate 5-semialdehyde from L-glutamate: step 1/2. Its function is as follows. Catalyzes the transfer of a phosphate group to glutamate to form L-glutamate 5-phosphate. The chain is Glutamate 5-kinase from Ligilactobacillus salivarius (strain UCC118) (Lactobacillus salivarius).